Here is a 308-residue protein sequence, read N- to C-terminus: MATITAAMVKELRETTGVGMMDCKQALAETDGNIDAAIDWLRKKGLSKAAKKAGRVAAEGLIGALTDGTKGVVIEVNSETDFVARNEQFQGLVKMIAQVALKVGADLDAINAAPVGSTTVAGAIADAIATIGENMTLRRAAALSVSQGVVASYIHNAVIDGAGKMGVIVALESAGKADELAVLGRQLAMHVAAANPQALDPTSLDPAVVQREREVMADKYRQQGKPENMIEKIVENGLKTYYKEVCLLEQAYIHDEKGKSVAQAVKEAEGKVGAPIKIVGFVRYALGEGIEKQTSDFAAEVAAASGQK.

An involved in Mg(2+) ion dislocation from EF-Tu region spans residues 80–83; that stretch reads TDFV.

Belongs to the EF-Ts family.

It localises to the cytoplasm. Associates with the EF-Tu.GDP complex and induces the exchange of GDP to GTP. It remains bound to the aminoacyl-tRNA.EF-Tu.GTP complex up to the GTP hydrolysis stage on the ribosome. The protein is Elongation factor Ts of Rhodopseudomonas palustris (strain ATCC BAA-98 / CGA009).